The primary structure comprises 975 residues: Probable dipeptidyl-aminopeptidase B (975 aa).

The span at 1–20 (MAEHGHNMWEEEPSKGRDSL) shows a compositional bias: basic and acidic residues. The disordered stretch occupies residues 1 to 111 (MAEHGHNMWE…LSAASGSAGK (111 aa)). Topologically, residues 1–125 (MAEHGHNMWE…YRMMDRGLRR (125 aa)) are cytoplasmic. Over residues 22-31 (SDSSASTTSL) the composition is skewed to low complexity. The span at 68–84 (LDDEDPLKDEASGDYDL) shows a compositional bias: acidic residues. The helical; Signal-anchor for type II membrane protein transmembrane segment at 126–146 (VLIIASLVFVTAWVGGLFIYI) threads the bilayer. Topologically, residues 147-975 (SHKSYLHGSE…IDNAKPQGKR (829 aa)) are vacuolar. 3 N-linked (GlcNAc...) asparagine glycosylation sites follow: N207, N397, and N622. The active-site Charge relay system is the S826. The N-linked (GlcNAc...) asparagine glycan is linked to N885. Residues D903 and H936 each act as charge relay system in the active site.

The protein belongs to the peptidase S9B family.

Its subcellular location is the vacuole membrane. It carries out the reaction Release of an N-terminal dipeptide, Xaa-Yaa-|-Zaa-, from a polypeptide, preferentially when Yaa is Pro, provided Zaa is neither Pro nor hydroxyproline.. Type IV dipeptidyl-peptidase which removes N-terminal dipeptides sequentially from polypeptides having unsubstituted N-termini provided that the penultimate residue is proline. The sequence is that of Probable dipeptidyl-aminopeptidase B (DAPB) from Grosmannia clavigera (strain kw1407 / UAMH 11150) (Blue stain fungus).